A 388-amino-acid polypeptide reads, in one-letter code: Chorismate synthase (388 aa).

NADP(+) contacts are provided by Arg39 and Arg45. Residues Glu95 to Gly115 are disordered. A compositionally biased stretch (basic residues) spans Lys98–Pro108. FMN is bound by residues Arg130–Ser132, Asn251–Ala252, Gly296, Lys311–Thr315, and Arg337.

It belongs to the chorismate synthase family. As to quaternary structure, homotetramer. The cofactor is FMNH2.

The enzyme catalyses 5-O-(1-carboxyvinyl)-3-phosphoshikimate = chorismate + phosphate. It functions in the pathway metabolic intermediate biosynthesis; chorismate biosynthesis; chorismate from D-erythrose 4-phosphate and phosphoenolpyruvate: step 7/7. Functionally, catalyzes the anti-1,4-elimination of the C-3 phosphate and the C-6 proR hydrogen from 5-enolpyruvylshikimate-3-phosphate (EPSP) to yield chorismate, which is the branch point compound that serves as the starting substrate for the three terminal pathways of aromatic amino acid biosynthesis. This reaction introduces a second double bond into the aromatic ring system. The sequence is that of Chorismate synthase from Enterococcus faecalis (strain ATCC 700802 / V583).